The following is a 681-amino-acid chain: Potassium-transporting ATPase ATP-binding subunit (681 aa).

4 consecutive transmembrane segments (helical) span residues 30–50 (LLVY…FFGI), 59–79 (LAIA…EAIA), 216–236 (ILLV…LPFT), and 255–275 (IALL…SIGI). D306 acts as the 4-aspartylphosphate intermediate in catalysis. Residues D343, E347, 376–383 (FTATTRMS), and K394 each bind ATP. Mg(2+) is bound by residues D517 and D521. 3 consecutive transmembrane segments (helical) span residues 587–607 (FAII…LNLM), 615–635 (AILS…PLSL), and 661–681 (LVAP…LGIV).

This sequence belongs to the cation transport ATPase (P-type) (TC 3.A.3) family. Type IA subfamily. The system is composed of three essential subunits: KdpA, KdpB and KdpC.

The protein localises to the cell membrane. It catalyses the reaction K(+)(out) + ATP + H2O = K(+)(in) + ADP + phosphate + H(+). In terms of biological role, part of the high-affinity ATP-driven potassium transport (or Kdp) system, which catalyzes the hydrolysis of ATP coupled with the electrogenic transport of potassium into the cytoplasm. This subunit is responsible for energy coupling to the transport system and for the release of the potassium ions to the cytoplasm. In Listeria welshimeri serovar 6b (strain ATCC 35897 / DSM 20650 / CCUG 15529 / CIP 8149 / NCTC 11857 / SLCC 5334 / V8), this protein is Potassium-transporting ATPase ATP-binding subunit.